The chain runs to 247 residues: Adenosylcobinamide-GDP ribazoletransferase (247 aa).

Helical transmembrane passes span 34-54, 57-77, 113-133, 138-158, and 194-214; these read IITFPLIGLLLGAISGLVFMV, AWCGAPLAALFSVLVLALMTG, GGLALIFVVLAKILVLSELAL, ILASLAAACAVSRGTAALLMY, and VLLLGMHGVAAMVVTMVAIFI.

The protein belongs to the CobS family. The cofactor is Mg(2+).

The protein resides in the cell inner membrane. The enzyme catalyses alpha-ribazole + adenosylcob(III)inamide-GDP = adenosylcob(III)alamin + GMP + H(+). The catalysed reaction is alpha-ribazole 5'-phosphate + adenosylcob(III)inamide-GDP = adenosylcob(III)alamin 5'-phosphate + GMP + H(+). It participates in cofactor biosynthesis; adenosylcobalamin biosynthesis; adenosylcobalamin from cob(II)yrinate a,c-diamide: step 7/7. Joins adenosylcobinamide-GDP and alpha-ribazole to generate adenosylcobalamin (Ado-cobalamin). Also synthesizes adenosylcobalamin 5'-phosphate from adenosylcobinamide-GDP and alpha-ribazole 5'-phosphate. This is Adenosylcobinamide-GDP ribazoletransferase from Shigella flexneri.